A 433-amino-acid polypeptide reads, in one-letter code: Steroid hormone receptor ERR2 (433 aa).

The interval 1 to 41 is disordered; it reads MSSEDRHLGSSCGSFIKTEPSSPSSGIDALSHHSPSGSSDA. Low complexity predominate over residues 32 to 41; the sequence is HHSPSGSSDA. The interaction with NANOG stretch occupies residues 93 to 211; it reads YMLNAIPKRL…SPPAKKPLTK (119 aa). The nuclear receptor DNA-binding region spans 100-186; sequence KRLCLVCGDI…RVRGGRQKYK (87 aa). 2 NR C4-type zinc fingers span residues 103–123 and 139–163; these read CLVC…CEAC and CPAT…FMKC. The essential for ESRRB transcriptional activity and interaction with NCOA3 stretch occupies residues 203-433; that stretch reads PPAKKPLTKI…LFLEMLEAKV (231 aa). The NR LBD domain maps to 208 to 432; sequence PLTKIVSYLL…KLFLEMLEAK (225 aa).

It belongs to the nuclear hormone receptor family. NR3 subfamily. Binds DNA as a monomer. Interacts with NR0B1; represses ESRRB activity at the GATA6 promoter. Interacts with NANOG; reciprocally modulates their transcriptional activities and activates POU5F1 expression. Interacts with NCOA3; mediates the interaction between ESRRB and RNA polymerase II complexes and allows NCOA3 corecruitment to ESRRB, KLF4, NANOG, and SOX2 enhancer regions to trigger ESRRB-dependent gene activation involved in self-renewal and pluripotency. Interacts with KDM1A; co-occupes the core set of ESRRB targets including ELF5 and EOMES. Interacts with the multiprotein complex Integrator, at least composed of INTS1, INTS2, INTS3, INTS4, INTS5, INTS6, INTS7, INTS8, INTS9/RC74, INTS10, INTS11/CPSF3L and INTS12; ESRRB is probably not a core component of the integrator complex and associates to integrator via its interaction with INTS1 and INTS9; attracts the transcriptional machinery. Interacts with JARID2. Interacts with POU5F1; recruits ESRRB near the POU5F1-SOX2 element in the NANOG proximal promoter leading to activation of NANOG expression; the interaction is DNA independent. Post-translationally, acetylated by PCAF/KAT2 (in vitro).

Its subcellular location is the nucleus. The protein localises to the cytoplasm. It is found in the chromosome. In terms of biological role, transcription factor that binds a canonical ESRRB recognition (ERRE) sequence 5'TCAAGGTCA-3' localized on promoter and enhancer of targets genes regulating their expression or their transcription activity. Plays a role, in a LIF independent manner, in maintainance of self-renewal and pluripotency of embryonic and trophoblast stem cells through different signaling pathways including FGF signaling pathway and Wnt signaling pathways. Involved in morula development (2-16 cells embryos) by acting as a regulator at the 8-cell stage. Upon FGF signaling pathway activation, interacts with KDM1A by directly binding to enhancer site of ELF5 and EOMES and activating their transcription leading to self-renewal of trophoblast stem cells. Also regulates expression of multiple rod-specific genes and is required for survival of this cell type. Plays a role as transcription factor activator of GATA6, NR0B1, POU5F1 and PERM1. Plays a role as transcription factor repressor of NFE2L2 transcriptional activity and ESR1 transcriptional activity. During mitosis remains bound to a subset of interphase target genes, including pluripotency regulators, through the canonical ESRRB recognition (ERRE) sequence, leading to their transcriptional activation in early G1 phase. Can coassemble on structured DNA elements with other transcription factors like SOX2, POU5F1, KDM1A and NCOA3 to trigger ESRRB-dependent gene activation. This mechanism, in the case of SOX2 corecruitment prevents the embryonic stem cells (ESCs) to epiblast stem cells (EpiSC) transition through positive regulation of NR0B1 that inhibits the EpiSC transcriptional program. Also plays a role inner ear development by controlling expression of ion channels and transporters and in early placentation. The chain is Steroid hormone receptor ERR2 from Rattus norvegicus (Rat).